Consider the following 375-residue polypeptide: Probable neutral protease 2 homolog ARB_05817 (375 aa).

The N-terminal stretch at 1–19 is a signal peptide; that stretch reads MQVIVALAALGSLAAPALG. A propeptide spanning residues 20–189 is cleaved from the precursor; the sequence is FSIPRGVPVS…RGPLTRINKR (170 aa). Cystine bridges form between Cys-197–Cys-267 and Cys-274–Cys-292. His-317 provides a ligand contact to Zn(2+). The active site involves Glu-318. Residues His-321 and Asp-332 each coordinate Zn(2+).

Belongs to the peptidase M35 family. Zn(2+) is required as a cofactor.

The protein resides in the secreted. The catalysed reaction is Preferential cleavage of bonds with hydrophobic residues in P1'. Also 3-Asn-|-Gln-4 and 8-Gly-|-Ser-9 bonds in insulin B chain.. Its function is as follows. Probable secreted metalloprotease that shows high activities on basic nuclear substrates such as histone and protamine. May be involved in virulence. This is Probable neutral protease 2 homolog ARB_05817 from Arthroderma benhamiae (strain ATCC MYA-4681 / CBS 112371) (Trichophyton mentagrophytes).